Consider the following 311-residue polypeptide: Ribosomal RNA small subunit methyltransferase H (311 aa).

S-adenosyl-L-methionine contacts are provided by residues 32 to 34, Asp52, Phe79, Asp100, and Gln107; that span reads AGH.

The protein belongs to the methyltransferase superfamily. RsmH family.

It is found in the cytoplasm. It catalyses the reaction cytidine(1402) in 16S rRNA + S-adenosyl-L-methionine = N(4)-methylcytidine(1402) in 16S rRNA + S-adenosyl-L-homocysteine + H(+). Its function is as follows. Specifically methylates the N4 position of cytidine in position 1402 (C1402) of 16S rRNA. This is Ribosomal RNA small subunit methyltransferase H from Staphylococcus aureus (strain COL).